The sequence spans 304 residues: Bifunctional protein FolD 3 (304 aa).

NADP(+) is bound by residues 172–174 (GRS), serine 197, and isoleucine 238.

This sequence belongs to the tetrahydrofolate dehydrogenase/cyclohydrolase family. In terms of assembly, homodimer.

The catalysed reaction is (6R)-5,10-methylene-5,6,7,8-tetrahydrofolate + NADP(+) = (6R)-5,10-methenyltetrahydrofolate + NADPH. It catalyses the reaction (6R)-5,10-methenyltetrahydrofolate + H2O = (6R)-10-formyltetrahydrofolate + H(+). It functions in the pathway one-carbon metabolism; tetrahydrofolate interconversion. In terms of biological role, catalyzes the oxidation of 5,10-methylenetetrahydrofolate to 5,10-methenyltetrahydrofolate and then the hydrolysis of 5,10-methenyltetrahydrofolate to 10-formyltetrahydrofolate. In Rhizorhabdus wittichii (strain DSM 6014 / CCUG 31198 / JCM 15750 / NBRC 105917 / EY 4224 / RW1) (Sphingomonas wittichii), this protein is Bifunctional protein FolD 3.